The primary structure comprises 306 residues: Anamorsin (306 aa).

The tract at residues 6–172 is N-terminal SAM-like domain; it reads IAPGQRVAVI…KPNFEVGSSS (167 aa). The linker stretch occupies residues 173 to 224; the sequence is QLKLSFAKKTSPSGKPSVDPATAKLWTLSASDMNDEEMDLLDSDELLDSEDL. [2Fe-2S] cluster contacts are provided by Cys237, Cys246, Cys249, and Cys251. The segment at 237–251 is fe-S binding site A; that stretch reads CKEKGKKKACKNCTC. [4Fe-4S] cluster-binding residues include Cys270, Cys273, Cys281, and Cys284. 2 short sequence motifs (cx2C motif) span residues 270–273 and 281–284; these read CGNC and CASC. The fe-S binding site B stretch occupies residues 270–284; it reads CGNCYLGDAFRCASC.

Belongs to the anamorsin family. Monomer. Interacts with NDOR1. Interacts with CHCHD4. Requires [2Fe-2S] cluster as cofactor. It depends on [4Fe-4S] cluster as a cofactor.

It localises to the cytoplasm. The protein resides in the nucleus. The protein localises to the mitochondrion intermembrane space. Functionally, component of the cytosolic iron-sulfur (Fe-S) protein assembly (CIA) machinery required for the maturation of extramitochondrial Fe-S proteins. Part of an electron transfer chain functioning in an early step of cytosolic Fe-S biogenesis, facilitating the de novo assembly of a [4Fe-4S] cluster on the scaffold complex NUBP1-NUBP2. Electrons are transferred to CIAPIN1 from NADPH via the FAD- and FMN-containing protein NDOR1. NDOR1-CIAPIN1 are also required for the assembly of the diferric tyrosyl radical cofactor of ribonucleotide reductase (RNR), probably by providing electrons for reduction during radical cofactor maturation in the catalytic small subunit. Has anti-apoptotic effects in the cell. Involved in negative control of cell death upon cytokine withdrawal. Promotes development of hematopoietic cells. This is Anamorsin from Gallus gallus (Chicken).